An 81-amino-acid chain; its full sequence is Antimicrobial peptide Con22 (81 aa).

Residues 1 to 22 (MNAKVMLVCLLVTMLVMEPAEA) form the signal peptide. Positions 66-81 (EAGQIPFDEFMNVLYS) are excised as a propeptide.

The protein belongs to the non-disulfide-bridged peptide (NDBP) superfamily. Long chain multifunctional peptide (group 2) family. As to expression, expressed by the venom gland.

The protein resides in the secreted. It is found in the target cell membrane. Functionally, at high concentrations, acts as a pore former in cellular membranes and causes the leakage of the cells. At submicromolar concentrations, degranulates granulocytes and has a weak hemolytic activity against human erythrocytes. Also strongly inhibits the production of superoxide anions. Has a strong antibacterial activity against Gram-negative bacteria but is less active against Gram-positive bacteria. Also has antifungal activity. This is Antimicrobial peptide Con22 from Urodacus yaschenkoi (Inland robust scorpion).